The primary structure comprises 440 residues: Syntrophin-1 (440 aa).

PH domains follow at residues Ala-2–Thr-208 and Gln-227–Tyr-340. Residues Thr-45–Arg-128 form the PDZ domain. The SU domain occupies Ser-384–Ala-440.

This sequence belongs to the syntrophin family. In terms of assembly, component of the dystrophin glycoprotein complex (DGC). Interacts with dyb-1, dys-1 and snf-6 to form the DGC. As to expression, expressed in neurons and muscles; particularly strong expression in the body wall, head and vulval muscles, and in ventral nerve cord (at protein level).

Its subcellular location is the membrane. The protein resides in the cytoplasm. It localises to the cytoskeleton. Adapter protein that binds to and probably organizes the subcellular localization of a variety of membrane proteins. May link various receptors to the actin cytoskeleton and the dystrophin glycoprotein complex (DGC). May also act by slowing calcium channel activity via a direct or indirect mechanism potentially involving other second messengers. Plays an early role in the formation of the neuromuscular junction and is necessary for muscle maintenance. The protein is Syntrophin-1 of Caenorhabditis elegans.